We begin with the raw amino-acid sequence, 236 residues long: RING-H2 finger protein ATL7 (236 aa).

A helical membrane pass occupies residues 31–51 (AFIFSVPICFTFIVLFVLYVI). The segment at 111-153 (CSVCLGDYQAEEKLQQMPSCGHTFHMECIDLWLTSHTTCPLCR) adopts an RING-type; atypical zinc-finger fold. A compositionally biased stretch (polar residues) spans 176–196 (ENSNGGEASTQPDSQSATEAI). The interval 176–236 (ENSNGGEAST…SDGCCTCRLG (61 aa)) is disordered. Positions 197–221 (SHTDDVEEGNRDSQEVSKETEENDR) are enriched in basic and acidic residues.

The protein belongs to the RING-type zinc finger family. ATL subfamily.

Its subcellular location is the membrane. The enzyme catalyses S-ubiquitinyl-[E2 ubiquitin-conjugating enzyme]-L-cysteine + [acceptor protein]-L-lysine = [E2 ubiquitin-conjugating enzyme]-L-cysteine + N(6)-ubiquitinyl-[acceptor protein]-L-lysine.. It participates in protein modification; protein ubiquitination. This chain is RING-H2 finger protein ATL7 (ATL7), found in Arabidopsis thaliana (Mouse-ear cress).